Here is a 282-residue protein sequence, read N- to C-terminus: MTDLTQLEMIIEKAFDDRNSINTTTKGEILESVEHALNLLDKGEVRVVKRQKNGKWHVHQWLKKAVLLSFRLNPMQIMTGGVNGTSWWDKVPSKFSHWQEADFKKADFRSVPGAIVRHSAYIAPNVILMPSFVNLGAFVDEGTMVDTWATVGSCAQIGKHVHLSGGVGIGGVLEPLQANPTIIEDHCFIGARSEVVEGCIIREGSVLGMGVFIGKSTKIIDRTTGEIFIGEVPPYSVVVPGSLPGKPLPNGEIGPNLYCAVIVKRVDQKTREKTSINDLLRD.

Substrate contacts are provided by arginine 109 and aspartate 146.

It belongs to the transferase hexapeptide repeat family. Homotrimer.

The protein resides in the cytoplasm. The catalysed reaction is (S)-2,3,4,5-tetrahydrodipicolinate + succinyl-CoA + H2O = (S)-2-succinylamino-6-oxoheptanedioate + CoA. It functions in the pathway amino-acid biosynthesis; L-lysine biosynthesis via DAP pathway; LL-2,6-diaminopimelate from (S)-tetrahydrodipicolinate (succinylase route): step 1/3. This Bartonella henselae (strain ATCC 49882 / DSM 28221 / CCUG 30454 / Houston 1) (Rochalimaea henselae) protein is 2,3,4,5-tetrahydropyridine-2,6-dicarboxylate N-succinyltransferase.